The following is a 180-amino-acid chain: Inner membrane-spanning protein YciB (180 aa).

Transmembrane regions (helical) follow at residues 25–45, 49–69, 76–96, 118–138, and 150–170; these read QNAT…CYII, VSKL…ITLI, IKIK…MSGI, IILS…NEVV, and FKVF…LPLL.

It belongs to the YciB family.

It localises to the cell inner membrane. Its function is as follows. Plays a role in cell envelope biogenesis, maintenance of cell envelope integrity and membrane homeostasis. This Rickettsia prowazekii (strain Madrid E) protein is Inner membrane-spanning protein YciB.